We begin with the raw amino-acid sequence, 152 residues long: Acidic phospholipase A2 S17-58 (152 aa).

The N-terminal stretch at methionine 1–alanine 19 is a signal peptide. Residues serine 20–leucine 27 constitute a propeptide that is removed on maturation. 7 disulfides stabilise this stretch: cysteine 38-cysteine 104, cysteine 54-cysteine 151, cysteine 56-cysteine 72, cysteine 71-cysteine 132, cysteine 78-cysteine 125, cysteine 88-cysteine 118, and cysteine 111-cysteine 123. Residues tyrosine 55, glycine 57, and glycine 59 each coordinate Ca(2+). Residue histidine 75 is part of the active site. Residue aspartate 76 coordinates Ca(2+). The active site involves aspartate 126.

It belongs to the phospholipase A2 family. Group I subfamily. D49 sub-subfamily. Ca(2+) is required as a cofactor. As to expression, expressed by the venom gland.

The protein localises to the secreted. It catalyses the reaction a 1,2-diacyl-sn-glycero-3-phosphocholine + H2O = a 1-acyl-sn-glycero-3-phosphocholine + a fatty acid + H(+). In terms of biological role, snake venom phospholipase A2 (PLA2) that inhibits collagen-induced platelet aggregation. PLA2 catalyzes the calcium-dependent hydrolysis of the 2-acyl groups in 3-sn-phosphoglycerides. The sequence is that of Acidic phospholipase A2 S17-58 from Austrelaps superbus (Lowland copperhead snake).